A 941-amino-acid chain; its full sequence is Endoplasmic reticulum aminopeptidase 1 (941 aa).

Position 1 (Met1) is a topological domain, cytoplasmic. The chain crosses the membrane as a helical; Signal-anchor for type II membrane protein span at residues 2-21 (VFLPLKWSLATMSFLLSSLL). The Lumenal segment spans residues 22 to 941 (ALLTVSTPSW…WLQSEKLERM (920 aa)). N-linked (GlcNAc...) asparagine glycosylation is found at Asn70 and Asn154. Substrate contacts are provided by residues Glu183 and 317–321 (GAMEN). A Zn(2+)-binding site is contributed by His353. The active-site Proton acceptor is Glu354. Zn(2+) is bound by residues His357 and Glu376. 2 disulfides stabilise this stretch: Cys404/Cys443 and Cys736/Cys743. N-linked (GlcNAc...) asparagine glycosylation is present at Asn414. 2 N-linked (GlcNAc...) asparagine glycosylation sites follow: Asn760 and Asn901.

Belongs to the peptidase M1 family. In terms of assembly, monomer. May also exist as a heterodimer; with ERAP2. Interacts with RBMX. The cofactor is Zn(2+). N-glycosylated. Ubiquitous.

The protein localises to the endoplasmic reticulum membrane. In terms of biological role, aminopeptidase that plays a central role in peptide trimming, a step required for the generation of most HLA class I-binding peptides. Peptide trimming is essential to customize longer precursor peptides to fit them to the correct length required for presentation on MHC class I molecules. Strongly prefers substrates 9-16 residues long. Rapidly degrades 13-mer to a 9-mer and then stops. Preferentially hydrolyzes the residue Leu and peptides with a hydrophobic C-terminus, while it has weak activity toward peptides with charged C-terminus. May play a role in the inactivation of peptide hormones. May be involved in the regulation of blood pressure through the inactivation of angiotensin II and/or the generation of bradykinin in the kidney. The sequence is that of Endoplasmic reticulum aminopeptidase 1 (ERAP1) from Homo sapiens (Human).